We begin with the raw amino-acid sequence, 164 residues long: RSADAQQHGLWGKRQNPGLWGRSADAQQHGLWGKRQNPGLWGRSAEPGQPGLWGKRQNPGLWGRSAEPLQPGLWGKRQNPGLWGRSADAQQPGLWGKRQDLDIGMWGKRQKAGLWGRSADPGQLGLWGKRRSRIGLWGRSYEPPQFEDLEDLKKKSAIPKPSEQ.

A propeptide spanning residues 1–6 is cleaved from the precursor; sequence RSADAQ. A disordered region spans residues 1 to 92; it reads RSADAQQHGL…WGRSADAQQP (92 aa). 2 positions are modified to tryptophan amide: Trp11 and Trp20. Positions 23 to 27 are excised as a propeptide; the sequence is SADAQ. Tryptophan amide occurs at positions 32 and 41. Residues 44–49 constitute a propeptide that is removed on maturation; that stretch reads SAEPGQ. 2 positions are modified to tryptophan amide: Trp53 and Trp62. Residues 65–70 constitute a propeptide that is removed on maturation; the sequence is SAEPLQ. Tryptophan amide is present on residues Trp74 and Trp83. A propeptide spanning residues 86-90 is cleaved from the precursor; sequence SADAQ. Trp95, Trp106, and Trp115 each carry tryptophan amide. Positions 118–123 are excised as a propeptide; the sequence is SADPGQ. A tryptophan amide mark is found at Trp127 and Trp137. The propeptide occupies 140-164; the sequence is SYEPPQFEDLEDLKKKSAIPKPSEQ.

This sequence belongs to the LWamide neuropeptide family.

The protein resides in the secreted. Its function is as follows. Metamorphosin A may be part of an internal signaling system involved in control of metamorphosis. The sequence is that of LWamide neuropeptides from Actinia equina (Beadlet anemone).